Reading from the N-terminus, the 226-residue chain is Adenylate kinase (226 aa).

Residue 11-16 participates in ATP binding; sequence GSGKGT. The NMP stretch occupies residues 31-64; sequence SAGEILKHALSVTKFHFNFNTDNMLNQINSGNLV. AMP contacts are provided by residues 62–64, 90–93, and Q97; these read NLV and GFPR. Positions 127–164 are LID; the sequence is GRQVHIKSGRTYHIKFNPPKLDGIDDITGEKLVIRADD. ATP is bound by residues R128 and 137 to 138; that span reads TY. AMP contacts are provided by R161 and R172. Position 205 (Q205) interacts with ATP.

This sequence belongs to the adenylate kinase family. As to quaternary structure, monomer.

Its subcellular location is the cytoplasm. The catalysed reaction is AMP + ATP = 2 ADP. The protein operates within purine metabolism; AMP biosynthesis via salvage pathway; AMP from ADP: step 1/1. In terms of biological role, catalyzes the reversible transfer of the terminal phosphate group between ATP and AMP. Plays an important role in cellular energy homeostasis and in adenine nucleotide metabolism. This Blochmanniella floridana protein is Adenylate kinase.